Consider the following 465-residue polypeptide: Cysteine--tRNA ligase (465 aa).

Residue C29 participates in Zn(2+) binding. The 'HIGH' region signature appears at 31-41; that stretch reads PTVYNYIHIGN. The Zn(2+) site is built by C209, H234, and E238. A 'KMSKS' region motif is present at residues 266–270; sequence KMSKS. Position 269 (K269) interacts with ATP. S270 is subject to Phosphoserine.

Belongs to the class-I aminoacyl-tRNA synthetase family. As to quaternary structure, monomer. It depends on Zn(2+) as a cofactor.

The protein resides in the cytoplasm. It carries out the reaction tRNA(Cys) + L-cysteine + ATP = L-cysteinyl-tRNA(Cys) + AMP + diphosphate. This Bacillus cytotoxicus (strain DSM 22905 / CIP 110041 / 391-98 / NVH 391-98) protein is Cysteine--tRNA ligase.